The following is a 305-amino-acid chain: UDP-3-O-acyl-N-acetylglucosamine deacetylase (305 aa).

3 residues coordinate Zn(2+): His-78, His-237, and Asp-241. The active-site Proton donor is the His-264.

It belongs to the LpxC family. The cofactor is Zn(2+).

The enzyme catalyses a UDP-3-O-[(3R)-3-hydroxyacyl]-N-acetyl-alpha-D-glucosamine + H2O = a UDP-3-O-[(3R)-3-hydroxyacyl]-alpha-D-glucosamine + acetate. The protein operates within glycolipid biosynthesis; lipid IV(A) biosynthesis; lipid IV(A) from (3R)-3-hydroxytetradecanoyl-[acyl-carrier-protein] and UDP-N-acetyl-alpha-D-glucosamine: step 2/6. In terms of biological role, catalyzes the hydrolysis of UDP-3-O-myristoyl-N-acetylglucosamine to form UDP-3-O-myristoylglucosamine and acetate, the committed step in lipid A biosynthesis. This chain is UDP-3-O-acyl-N-acetylglucosamine deacetylase, found in Paraburkholderia xenovorans (strain LB400).